A 116-amino-acid polypeptide reads, in one-letter code: Dynein light chain Tctex-type 3 (116 aa).

Tyr4 is modified (3'-nitrotyrosine).

This sequence belongs to the dynein light chain Tctex-type family. Homodimer. The cytoplasmic dynein 1 complex consists of two catalytic heavy chains (HCs) and a number of non-catalytic subunits presented by intermediate chains (ICs), light intermediate chains (LICs) and light chains (LCs); the composition seems to vary in respect to the IC, LIC and LC composition. The heavy chain homodimer serves as a scaffold for the probable homodimeric assembly of the respective non-catalytic subunits. The ICs and LICs bind directly to the HC dimer and the LCs assemble on the IC dimer. DYNLT1 and DYNLT3 compete for association with dynein IC (DYNC1I1 or DYNC1I2). Self-associates. Interacts with DYNC1I1 and DYNC1I2. Interacts with BUB3. Interacts with SATB1 in nucleus to form complex with matrix attachment regions (MARs) of DNA.

The protein localises to the nucleus. It localises to the cytoplasm. It is found in the cytoskeleton. Its subcellular location is the chromosome. The protein resides in the centromere. The protein localises to the kinetochore. Acts as one of several non-catalytic accessory components of the cytoplasmic dynein 1 complex that are thought to be involved in linking dynein to cargos and to adapter proteins that regulate dynein function. Cytoplasmic dynein 1 acts as a motor for the intracellular retrograde motility of vesicles and organelles along microtubules. Probably binds BUB3 as part of transport cargo. Required for the efficient progression through mitosis. This chain is Dynein light chain Tctex-type 3 (DYNLT3), found in Ovis aries (Sheep).